The chain runs to 370 residues: tRNA (guanine(9)-/adenine(9)-N1)-methyltransferase (370 aa).

Residues 87 to 292 (TPEELREKLP…KELPKRATRY (206 aa)) form the SAM-dependent MTase TRM10-type domain.

Belongs to the class IV-like SAM-binding methyltransferase superfamily. TRM10 family.

The protein localises to the cytoplasm. It catalyses the reaction adenosine(9) in tRNA + S-adenosyl-L-methionine = N(1)-methyladenosine(9) in tRNA + S-adenosyl-L-homocysteine + H(+). The catalysed reaction is guanosine(9) in tRNA + S-adenosyl-L-methionine = N(1)-methylguanosine(9) in tRNA + S-adenosyl-L-homocysteine + H(+). Catalyzes the S-adenosyl-L-methionine-dependent formation of either N(1)-methyladenine or N(1)-methylguanine at position 9 (m1A9 or m1G9) in tRNA. This chain is tRNA (guanine(9)-/adenine(9)-N1)-methyltransferase, found in Thermococcus kodakarensis (strain ATCC BAA-918 / JCM 12380 / KOD1) (Pyrococcus kodakaraensis (strain KOD1)).